Here is a 644-residue protein sequence, read N- to C-terminus: Ribonuclease R (644 aa).

One can recognise an RNB domain in the interval 211 to 529 (RINYSHIPFI…LHRLLKELLF (319 aa)). The S1 motif domain occupies 573-644 (LEFLEKEFLG…ITERIKEHVS (72 aa)).

The protein belongs to the RNR ribonuclease family. RNase R subfamily.

The protein localises to the cytoplasm. It carries out the reaction Exonucleolytic cleavage in the 3'- to 5'-direction to yield nucleoside 5'-phosphates.. In terms of biological role, 3'-5' exoribonuclease that releases 5'-nucleoside monophosphates and is involved in maturation of structured RNAs. The protein is Ribonuclease R of Helicobacter pylori (strain J99 / ATCC 700824) (Campylobacter pylori J99).